The following is a 115-amino-acid chain: NAD(P)H-quinone oxidoreductase subunit M (115 aa).

It belongs to the complex I NdhM subunit family. NDH-1 can be composed of about 15 different subunits; different subcomplexes with different compositions have been identified which probably have different functions.

It localises to the cellular thylakoid membrane. It carries out the reaction a plastoquinone + NADH + (n+1) H(+)(in) = a plastoquinol + NAD(+) + n H(+)(out). It catalyses the reaction a plastoquinone + NADPH + (n+1) H(+)(in) = a plastoquinol + NADP(+) + n H(+)(out). Its function is as follows. NDH-1 shuttles electrons from an unknown electron donor, via FMN and iron-sulfur (Fe-S) centers, to quinones in the respiratory and/or the photosynthetic chain. The immediate electron acceptor for the enzyme in this species is believed to be plastoquinone. Couples the redox reaction to proton translocation, and thus conserves the redox energy in a proton gradient. Cyanobacterial NDH-1 also plays a role in inorganic carbon-concentration. The sequence is that of NAD(P)H-quinone oxidoreductase subunit M from Prochlorococcus marinus (strain MIT 9211).